A 426-amino-acid polypeptide reads, in one-letter code: MLYPRALLPAAVALASLVLAVPLEERQLAFDFNNQKVRGVNLGGWFVLEPWITPSIFQQWANGGDVIDEYSYTAALGKDEAFTRLNNHWATWITEEDFAEIASMGLNHVRIPIGYWALVAIPNDPYVQGQLSYVDRAIDWARKNGLKVMLDLHGAPGSQNGFDNSGRTGTIAWQSGDNVPNTLRAIQALAERYAPQTDVVTAIELLNEPANWGNDLSQIKKFYYDGWGNVRTQGQTAVTIHDAFLDPRSWNGFMNSEAGVNNVILDTHIYQVFSQNEVAMKPCAHVQTACSSIDKIKPTDKWTIVGEWTGAQTDCAKWLNGLGKGARYDGTLPGHSEGYYGSCDKKYEGTVDSMLPVDKTNLQYFVEAQLDAYESHTGWFFWTWKTESAPEWHFQNLTRAGLIPQPLDSRKVPSQCGTSQCLVPGN.

The signal sequence occupies residues 1–20 (MLYPRALLPAAVALASLVLA). Catalysis depends on Glu-208, which acts as the Proton donor. 2 cysteine pairs are disulfide-bonded: Cys-290/Cys-416 and Cys-315/Cys-343. The active-site Nucleophile is Glu-307.

It belongs to the glycosyl hydrolase 5 (cellulase A) family.

Its subcellular location is the secreted. It carries out the reaction Successive hydrolysis of beta-D-glucose units from the non-reducing ends of (1-&gt;3)-beta-D-glucans, releasing alpha-glucose.. In terms of biological role, beta-glucanases participate in the metabolism of beta-glucan, the main structural component of the cell wall. It could also function biosynthetically as a transglycosylase. This chain is Glucan 1,3-beta-glucosidase, found in Blumeria graminis (Powdery mildew).